Consider the following 64-residue polypeptide: Enteric beta-defensin (64 aa).

An N-terminal signal peptide occupies residues 1 to 26 (MRLHHLLLTLLFLVLSAGSGFTQGIS). 3 disulfides stabilise this stretch: C31-C60, C38-C53, and C43-C61.

This sequence belongs to the beta-defensin family. LAP/TAP subfamily. Inducibly expressed in enteric epithelial cells.

The protein localises to the secreted. Its function is as follows. Has antibacterial activity. This is Enteric beta-defensin (EBD) from Bos taurus (Bovine).